Reading from the N-terminus, the 428-residue chain is UPF0597 protein BF3772 (428 aa).

It belongs to the UPF0597 family.

The sequence is that of UPF0597 protein BF3772 from Bacteroides fragilis (strain YCH46).